The primary structure comprises 224 residues: UPF0758 protein VCM66_0205 (224 aa).

The tract at residues 1-20 is disordered; the sequence is MSLKQLPTESMPREKLLQRG. Residues 102–224 form the MPN domain; the sequence is ALTSPQQTKL…VVSFAERGWI (123 aa). 3 residues coordinate Zn(2+): His173, His175, and Asp186. The short motif at 173–186 is the JAMM motif element; it reads HNHPSGVAEPSQAD.

This sequence belongs to the UPF0758 family.

This Vibrio cholerae serotype O1 (strain M66-2) protein is UPF0758 protein VCM66_0205.